A 425-amino-acid chain; its full sequence is GTPase Obg (425 aa).

The Obg domain occupies 1–158 (MFIDKARIFV…RWITLELKMI (158 aa)). The OBG-type G domain maps to 159-330 (ADVGLLGFPN…VIAYVSKMLK (172 aa)). GTP is bound by residues 165–172 (GFPNVGKS), 190–194 (FTTLT), 212–215 (DIPG), 282–285 (NKFD), and 311–313 (SAA). Residues Ser-172 and Thr-192 each contribute to the Mg(2+) site. Residues 344 to 425 (YRPELDIGTE…IYELEFEFYN (82 aa)) enclose the OCT domain.

This sequence belongs to the TRAFAC class OBG-HflX-like GTPase superfamily. OBG GTPase family. As to quaternary structure, monomer. It depends on Mg(2+) as a cofactor.

The protein resides in the cytoplasm. In terms of biological role, an essential GTPase which binds GTP, GDP and possibly (p)ppGpp with moderate affinity, with high nucleotide exchange rates and a fairly low GTP hydrolysis rate. Plays a role in control of the cell cycle, stress response, ribosome biogenesis and in those bacteria that undergo differentiation, in morphogenesis control. The chain is GTPase Obg from Clostridioides difficile (strain 630) (Peptoclostridium difficile).